Reading from the N-terminus, the 71-residue chain is ATP synthase F(0) complex subunit e, mitochondrial (71 aa).

K34 carries the N6-acetyllysine modification. Residue S68 is modified to Phosphoserine.

The protein belongs to the ATPase e subunit family. Component of the ATP synthase complex composed at least of ATP5F1A/subunit alpha, ATP5F1B/subunit beta, ATP5MC1/subunit c (homooctomer), MT-ATP6/subunit a, MT-ATP8/subunit 8, ATP5ME/subunit e, ATP5MF/subunit f, ATP5MG/subunit g, ATP5MK/subunit k, ATP5MJ/subunit j, ATP5F1C/subunit gamma, ATP5F1D/subunit delta, ATP5F1E/subunit epsilon, ATP5PF/subunit F6, ATP5PB/subunit b, ATP5PD/subunit d, ATP5PO/subunit OSCP. ATP synthase complex consists of a soluble F(1) head domain (subunits alpha(3) and beta(3)) - the catalytic core - and a membrane F(0) domain - the membrane proton channel (subunits c, a, 8, e, f, g, k and j). These two domains are linked by a central stalk (subunits gamma, delta, and epsilon) rotating inside the F1 region and a stationary peripheral stalk (subunits F6, b, d, and OSCP).

Its subcellular location is the mitochondrion. The protein localises to the mitochondrion inner membrane. Its function is as follows. Subunit e, of the mitochondrial membrane ATP synthase complex (F(1)F(0) ATP synthase or Complex V) that produces ATP from ADP in the presence of a proton gradient across the membrane which is generated by electron transport complexes of the respiratory chain. ATP synthase complex consist of a soluble F(1) head domain - the catalytic core - and a membrane F(1) domain - the membrane proton channel. These two domains are linked by a central stalk rotating inside the F(1) region and a stationary peripheral stalk. During catalysis, ATP synthesis in the catalytic domain of F(1) is coupled via a rotary mechanism of the central stalk subunits to proton translocation. In vivo, can only synthesize ATP although its ATP hydrolase activity can be activated artificially in vitro. Part of the complex F(0) domain. The sequence is that of ATP synthase F(0) complex subunit e, mitochondrial from Pongo abelii (Sumatran orangutan).